Reading from the N-terminus, the 518-residue chain is Golgi-associated olfactory signaling regulator (518 aa).

The signal sequence occupies residues 1 to 19 (MKSFSRILFLVFLLAGLRS). Residues 20 to 409 (KAAPSAPLPL…GRPRGAAGGA (390 aa)) lie on the Extracellular side of the membrane. Residues 38 to 377 (HPSETSPLKG…ATLRAPQRHS (340 aa)) are disordered. Residues 92-106 (DLRETPHPESPETPK) show a composition bias toward basic and acidic residues. Asn-124 carries N-linked (GlcNAc...) asparagine glycosylation. Positions 138–153 (TPGPTEMPHPGSPETP) are enriched in pro residues. N-linked (GlcNAc...) asparagine glycosylation is present at Asn-156. Polar residues-rich tracts occupy residues 168–180 (TPNT…TPQE) and 187–207 (LNAT…NPTK). Residues Asn-188 and Asn-220 are each glycosylated (N-linked (GlcNAc...) asparagine). Composition is skewed to basic and acidic residues over residues 209 to 220 (PDPKSPEKHDLN) and 236 to 247 (DPSKTPHPESHV). Polar residues-rich tracts occupy residues 248 to 270 (THNP…QNAT) and 276 to 285 (SDPQISTSLY). A glycan (N-linked (GlcNAc...) asparagine) is linked at Asn-268. A helical transmembrane segment spans residues 410 to 430 (LCLFFAGTALLIGIFVLLWCL). Residues 431–518 (YRRAARQRPF…SPATLPNNFV (88 aa)) are Cytoplasmic-facing. Residues 477–518 (HIATKQPPPTPPLPPKLPPPPRGGRPQRLEALSPATLPNNFV) form a disordered region. The segment covering 482–499 (QPPPTPPLPPKLPPPPRG) has biased composition (pro residues).

It is found in the golgi apparatus membrane. Functionally, required for proper function of the olfactory system. May be involved in establishing the acuity of olfactory sensory signaling. The protein is Golgi-associated olfactory signaling regulator (GFY) of Homo sapiens (Human).